A 223-amino-acid chain; its full sequence is Ribonuclease HII (223 aa).

Residues 32–223 form the RNase H type-2 domain; it reads FHIAGVDEVG…LKGRFRDNMS (192 aa). A divalent metal cation contacts are provided by Asp-38, Glu-39, and Asp-130.

This sequence belongs to the RNase HII family. The cofactor is Mn(2+). It depends on Mg(2+) as a cofactor.

It localises to the cytoplasm. The enzyme catalyses Endonucleolytic cleavage to 5'-phosphomonoester.. Its function is as follows. Endonuclease that specifically degrades the RNA of RNA-DNA hybrids. This chain is Ribonuclease HII, found in Bartonella quintana (strain Toulouse) (Rochalimaea quintana).